The primary structure comprises 359 residues: Holliday junction branch migration complex subunit RuvB (359 aa).

The segment covering 1-10 has biased composition (basic and acidic residues); sequence MPEHDPHQEN. The segment at 1 to 20 is disordered; it reads MPEHDPHQENRTVSSVRLED. Residues 4 to 188 form a large ATPase domain (RuvB-L) region; the sequence is HDPHQENRTV…FGIPLRLIFY (185 aa). Residues Leu27, Arg28, Gly69, Lys72, Thr73, Thr74, 135–137, Arg178, Tyr188, and Arg225 each bind ATP; that span reads EDF. Thr73 contacts Mg(2+). The interval 189 to 259 is small ATPAse domain (RuvB-S); sequence TASELELIVS…TADAALQRLE (71 aa). Positions 262–359 are head domain (RuvB-H); sequence SLGLDAMDRR…LLHRDGSADE (98 aa). DNA is bound by residues Arg298, Arg317, and Arg322.

It belongs to the RuvB family. In terms of assembly, homohexamer. Forms an RuvA(8)-RuvB(12)-Holliday junction (HJ) complex. HJ DNA is sandwiched between 2 RuvA tetramers; dsDNA enters through RuvA and exits via RuvB. An RuvB hexamer assembles on each DNA strand where it exits the tetramer. Each RuvB hexamer is contacted by two RuvA subunits (via domain III) on 2 adjacent RuvB subunits; this complex drives branch migration. In the full resolvosome a probable DNA-RuvA(4)-RuvB(12)-RuvC(2) complex forms which resolves the HJ.

It is found in the cytoplasm. It carries out the reaction ATP + H2O = ADP + phosphate + H(+). In terms of biological role, the RuvA-RuvB-RuvC complex processes Holliday junction (HJ) DNA during genetic recombination and DNA repair, while the RuvA-RuvB complex plays an important role in the rescue of blocked DNA replication forks via replication fork reversal (RFR). RuvA specifically binds to HJ cruciform DNA, conferring on it an open structure. The RuvB hexamer acts as an ATP-dependent pump, pulling dsDNA into and through the RuvAB complex. RuvB forms 2 homohexamers on either side of HJ DNA bound by 1 or 2 RuvA tetramers; 4 subunits per hexamer contact DNA at a time. Coordinated motions by a converter formed by DNA-disengaged RuvB subunits stimulates ATP hydrolysis and nucleotide exchange. Immobilization of the converter enables RuvB to convert the ATP-contained energy into a lever motion, pulling 2 nucleotides of DNA out of the RuvA tetramer per ATP hydrolyzed, thus driving DNA branch migration. The RuvB motors rotate together with the DNA substrate, which together with the progressing nucleotide cycle form the mechanistic basis for DNA recombination by continuous HJ branch migration. Branch migration allows RuvC to scan DNA until it finds its consensus sequence, where it cleaves and resolves cruciform DNA. This Granulibacter bethesdensis (strain ATCC BAA-1260 / CGDNIH1) protein is Holliday junction branch migration complex subunit RuvB.